The chain runs to 494 residues: Alpha-amylase-related protein (494 aa).

The first 20 residues, 1 to 20 (MIKFALALTLCLAGASLSLA), serve as a signal peptide directing secretion. The residue at position 21 (Gln-21) is a Pyrrolidone carboxylic acid. Cys-48 and Cys-104 are oxidised to a cystine. Residues Asn-118, Gln-169, and Asp-178 each coordinate Ca(2+). The cysteines at positions 157 and 171 are disulfide-linked. Residue Arg-206 coordinates chloride. Catalysis depends on Asp-208, which acts as the Nucleophile. His-212 provides a ligand contact to Ca(2+). The active-site Proton donor is the Glu-245. Positions 308 and 343 each coordinate chloride. 3 disulfides stabilise this stretch: Cys-376-Cys-382, Cys-418-Cys-441, and Cys-448-Cys-460.

It belongs to the glycosyl hydrolase 13 family. As to quaternary structure, monomer. Ca(2+) is required as a cofactor. Chloride serves as cofactor.

It localises to the secreted. The catalysed reaction is Endohydrolysis of (1-&gt;4)-alpha-D-glucosidic linkages in polysaccharides containing three or more (1-&gt;4)-alpha-linked D-glucose units.. The protein is Alpha-amylase-related protein (Amyrel) of Drosophila bocqueti (Fruit fly).